Consider the following 182-residue polypeptide: Large ribosomal subunit protein uL5 (182 aa).

Belongs to the universal ribosomal protein uL5 family. In terms of assembly, part of the 50S ribosomal subunit; part of the 5S rRNA/L5/L18/L25 subcomplex. Contacts the 5S rRNA and the P site tRNA. Forms a bridge to the 30S subunit in the 70S ribosome.

Its function is as follows. This is one of the proteins that bind and probably mediate the attachment of the 5S RNA into the large ribosomal subunit, where it forms part of the central protuberance. In the 70S ribosome it contacts protein S13 of the 30S subunit (bridge B1b), connecting the 2 subunits; this bridge is implicated in subunit movement. Contacts the P site tRNA; the 5S rRNA and some of its associated proteins might help stabilize positioning of ribosome-bound tRNAs. This chain is Large ribosomal subunit protein uL5, found in Coxiella burnetii (strain CbuG_Q212) (Coxiella burnetii (strain Q212)).